The chain runs to 201 residues: Glycerol-3-phosphate acyltransferase (201 aa).

Transmembrane regions (helical) follow at residues 9–29, 60–80, 86–106, 116–136, and 153–173; these read LTLI…FGLI, LAAA…LVAS, AAIG…WIGF, LGVL…VWIV, and IVVP…LFAI.

It belongs to the PlsY family. As to quaternary structure, probably interacts with PlsX.

It localises to the cell inner membrane. The catalysed reaction is an acyl phosphate + sn-glycerol 3-phosphate = a 1-acyl-sn-glycero-3-phosphate + phosphate. Its pathway is lipid metabolism; phospholipid metabolism. Catalyzes the transfer of an acyl group from acyl-phosphate (acyl-PO(4)) to glycerol-3-phosphate (G3P) to form lysophosphatidic acid (LPA). This enzyme utilizes acyl-phosphate as fatty acyl donor, but not acyl-CoA or acyl-ACP. The polypeptide is Glycerol-3-phosphate acyltransferase (Brucella anthropi (strain ATCC 49188 / DSM 6882 / CCUG 24695 / JCM 21032 / LMG 3331 / NBRC 15819 / NCTC 12168 / Alc 37) (Ochrobactrum anthropi)).